The chain runs to 382 residues: Beta-1,4-galactosyltransferase 6 (382 aa).

At 1-15 (MSALKRMMRVSNRSL) the chain is on the cytoplasmic side. Residues 16–35 (IAFIFFFSLSTSCLYFIYVA) traverse the membrane as a helical; Signal-anchor for type II membrane protein segment. Over 36-382 (PGIANTYLFM…MPELAPVEDY (347 aa)) the chain is Lumenal. Residues asparagine 71, asparagine 75, asparagine 83, asparagine 84, asparagine 99, and asparagine 122 are each glycosylated (N-linked (GlcNAc...) asparagine). Cysteine 108 and cysteine 152 are oxidised to a cystine. UDP-alpha-D-galactose-binding positions include 163-167 (PFRNR), 202-204 (FNR), 229-230 (VD), tyrosine 258, and tryptophan 290. The cysteines at positions 223 and 242 are disulfide-linked. Aspartate 230 contacts Mn(2+). An N-acetyl-D-glucosamine-binding site is contributed by 292 to 295 (GEDD). N-linked (GlcNAc...) asparagine glycosylation is present at asparagine 307. Residue histidine 323 coordinates Mn(2+). 323–324 (HH) serves as a coordination point for UDP-alpha-D-galactose. An N-acetyl-D-glucosamine-binding site is contributed by arginine 334. Asparagine 367 carries an N-linked (GlcNAc...) asparagine glycan.

This sequence belongs to the glycosyltransferase 7 family. Requires Mn(2+) as cofactor. Mg(2+) serves as cofactor. It depends on Ca(2+) as a cofactor. In terms of tissue distribution, highest expression in brain with lower levels found in lungs, heart, skeletal muscle and kidney. Lowest expression in testis, liver and spleen.

The protein resides in the golgi apparatus. Its subcellular location is the golgi stack membrane. It carries out the reaction a beta-D-glucosyl-(1&lt;-&gt;1')-N-acylsphing-4-enine + UDP-alpha-D-galactose = a beta-D-Gal-(1-&gt;4)-beta-D-Glc-(1&lt;-&gt;1)-Cer(d18:1(4E)) + UDP + H(+). The protein operates within protein modification; protein glycosylation. It participates in sphingolipid metabolism. Its activity is regulated as follows. Inhibited by EDTA. Catalyzes the synthesis of lactosylceramide (LacCer) via the transfer of galactose from UDP-galactose to glucosylceramide (GlcCer). LacCer is the starting point in the biosynthesis of all gangliosides (membrane-bound glycosphingolipids) which play pivotal roles in the CNS including neuronal maturation and axonal and myelin formation. This is Beta-1,4-galactosyltransferase 6 from Rattus norvegicus (Rat).